A 484-amino-acid polypeptide reads, in one-letter code: tRNA sulfurtransferase (484 aa).

One can recognise a THUMP domain in the interval glutamate 63 to arginine 167. ATP-binding positions include leucine 185 to isoleucine 186, lysine 267, glycine 289, and glutamine 298. Cysteine 346 and cysteine 458 form a disulfide bridge. One can recognise a Rhodanese domain in the interval isoleucine 406 to proline 484. The Cysteine persulfide intermediate role is filled by cysteine 458.

Belongs to the ThiI family.

It is found in the cytoplasm. The catalysed reaction is [ThiI sulfur-carrier protein]-S-sulfanyl-L-cysteine + a uridine in tRNA + 2 reduced [2Fe-2S]-[ferredoxin] + ATP + H(+) = [ThiI sulfur-carrier protein]-L-cysteine + a 4-thiouridine in tRNA + 2 oxidized [2Fe-2S]-[ferredoxin] + AMP + diphosphate. The enzyme catalyses [ThiS sulfur-carrier protein]-C-terminal Gly-Gly-AMP + S-sulfanyl-L-cysteinyl-[cysteine desulfurase] + AH2 = [ThiS sulfur-carrier protein]-C-terminal-Gly-aminoethanethioate + L-cysteinyl-[cysteine desulfurase] + A + AMP + 2 H(+). It participates in cofactor biosynthesis; thiamine diphosphate biosynthesis. Its function is as follows. Catalyzes the ATP-dependent transfer of a sulfur to tRNA to produce 4-thiouridine in position 8 of tRNAs, which functions as a near-UV photosensor. Also catalyzes the transfer of sulfur to the sulfur carrier protein ThiS, forming ThiS-thiocarboxylate. This is a step in the synthesis of thiazole, in the thiamine biosynthesis pathway. The sulfur is donated as persulfide by IscS. The sequence is that of tRNA sulfurtransferase from Shewanella pealeana (strain ATCC 700345 / ANG-SQ1).